Consider the following 82-residue polypeptide: MPKRTLQGVVVSDKQAKTVVVRVDRRFTHPLYKKTIRRSKNYHAHDENNEFKPGDMVWIEESKPISKLKRWTVVRGEQKKTA.

Belongs to the universal ribosomal protein uS17 family. Part of the 30S ribosomal subunit.

In terms of biological role, one of the primary rRNA binding proteins, it binds specifically to the 5'-end of 16S ribosomal RNA. This Nitrobacter hamburgensis (strain DSM 10229 / NCIMB 13809 / X14) protein is Small ribosomal subunit protein uS17.